A 54-amino-acid chain; its full sequence is Apelin receptor early endogenous ligand (54 aa).

The signal sequence occupies residues methionine 1–serine 25.

This sequence belongs to the Elabela/Toddler family. Interacts with APLNR.

It localises to the secreted. It is found in the extracellular space. Its function is as follows. Peptide hormone that functions as endogenous ligand for the G-protein-coupled apelin receptor (APLNR/APJ), that plays a role in the regulation of normal cardiovascular function and fluid homeostasis. Functions as a balanced agonist activating both G(i) protein pathway and beta-arrestin pathway of APLNR. Downstream G proteins activation, apelin can inhibit cAMP production and activate key intracellular effectors such as ERKs. On the other hand, APLNR activation induces beta-arrestin recruitment to the membrane leading to desensitization and internalization of the receptor. Required for mesendodermal differentiation, blood vessels formation and heart morphogenesis during early development and for adult cardiovascular homeostasis. Acts as a motogen by promoting mesendodermal cell migration during gastrulation by binding and activating APLNR. Acts as an early embryonic regulator of cellular movement with a role in migration and development of cardiac progenitor cells. May act as a chemoattractant for the activation of angioblast migration toward the embryonic midline, i.e. the position of the future vessel formation, during vasculogenesis. Positively regulates sinus venosus (SV)-derived endothelial cells migration into the developing heart to promote coronary blood vessel sprouting. Plays a role in placental vascular development; promotes placental trophoblast invasion and spiral artery remodeling in the uterus. Involved in the regulation of maternal cardiovascular homeostasis to prevent gestational hypertension and for potent cardioprotective functions during heart failure. Mediates myocardial contractility in an ERK1/2-dependent manner. The chain is Apelin receptor early endogenous ligand from Rattus norvegicus (Rat).